Reading from the N-terminus, the 197-residue chain is Putative NADH dehydrogenase/NAD(P)H nitroreductase Plav_3612 (197 aa).

This sequence belongs to the nitroreductase family. HadB/RutE subfamily. Requires FMN as cofactor.

This is Putative NADH dehydrogenase/NAD(P)H nitroreductase Plav_3612 from Parvibaculum lavamentivorans (strain DS-1 / DSM 13023 / NCIMB 13966).